A 517-amino-acid polypeptide reads, in one-letter code: Mitochondrial division protein fszA (517 aa).

GTP is bound by residues 60 to 64, 147 to 149, Glu-178, Arg-182, and Asp-225; these read GGGCN and GTG. Residues 496-517 are disordered; it reads FTNGNNNKPYNNNKNTPGSNYE. A compositionally biased stretch (low complexity) spans 497 to 517; it reads TNGNNNKPYNNNKNTPGSNYE.

The protein belongs to the FtsZ family.

Its subcellular location is the mitochondrion matrix. Functionally, probably involved in mitochondrion division process. When overexpressed, induces mitochondrial tubule formation. Binds to and hydrolyzes GTP. This is Mitochondrial division protein fszA (fszA) from Dictyostelium discoideum (Social amoeba).